The primary structure comprises 557 residues: (-)-germacrene D synthase (557 aa).

D310, D314, and E462 together coordinate Mg(2+). The short motif at 310–314 (DDIYD) is the DDXXD motif element.

This sequence belongs to the terpene synthase family. Tpsa subfamily. Requires Mg(2+) as cofactor. In terms of tissue distribution, expressed in flowers. Detected in stems, young leaves and tendrils.

It localises to the cytoplasm. It catalyses the reaction (2E,6E)-farnesyl diphosphate + H2O = (1E,4S,5E,7R)-germacra-1(10),5-dien-11-ol + diphosphate. It carries out the reaction (2E,6E)-farnesyl diphosphate = (-)-germacrene D + diphosphate. It participates in secondary metabolite biosynthesis; terpenoid biosynthesis. Its function is as follows. Involved in the biosynthesis of germacrene D. Can use farnesyl diphosphate as substrate, but not geranyl diphosphate or geranylgeranyl diphosphate. Produces mainly (-)-germacrene D along with gamma-cadinene. The sequence is that of (-)-germacrene D synthase from Vitis vinifera (Grape).